We begin with the raw amino-acid sequence, 256 residues long: Small ribosomal subunit protein eS1B (256 aa).

N-acetylalanine; partial is present on A2.

Belongs to the eukaryotic ribosomal protein eS1 family. In terms of assembly, component of the small ribosomal subunit. Mature ribosomes consist of a small (40S) and a large (60S) subunit. The 40S subunit contains about 33 different proteins and 1 molecule of RNA (18S). The 60S subunit contains about 49 different proteins and 3 molecules of RNA (25S, 5.8S and 5S).

The protein localises to the cytoplasm. This Clavispora lusitaniae (strain ATCC 42720) (Yeast) protein is Small ribosomal subunit protein eS1B.